Consider the following 677-residue polypeptide: Methionine--tRNA ligase (677 aa).

The 'HIGH' region motif lies at 15–25 (PYANGSIHLGH). Zn(2+) contacts are provided by Cys-146, Cys-149, Cys-159, and Cys-162. Positions 333 to 337 (KMSKS) match the 'KMSKS' region motif. Lys-336 provides a ligand contact to ATP. Residues 575–677 (DFAKIDLRVA…DGAKPGQQVK (103 aa)) enclose the tRNA-binding domain.

It belongs to the class-I aminoacyl-tRNA synthetase family. MetG type 1 subfamily. In terms of assembly, homodimer. Zn(2+) serves as cofactor.

It is found in the cytoplasm. It catalyses the reaction tRNA(Met) + L-methionine + ATP = L-methionyl-tRNA(Met) + AMP + diphosphate. Functionally, is required not only for elongation of protein synthesis but also for the initiation of all mRNA translation through initiator tRNA(fMet) aminoacylation. This chain is Methionine--tRNA ligase, found in Salmonella agona (strain SL483).